The chain runs to 417 residues: Serine hydroxymethyltransferase (417 aa).

(6S)-5,6,7,8-tetrahydrofolate-binding positions include Leu121 and 125-127; that span reads GHL. The residue at position 229 (Lys229) is an N6-(pyridoxal phosphate)lysine. 355–357 contributes to the (6S)-5,6,7,8-tetrahydrofolate binding site; the sequence is SPF.

Belongs to the SHMT family. Homodimer. The cofactor is pyridoxal 5'-phosphate.

The protein localises to the cytoplasm. The enzyme catalyses (6R)-5,10-methylene-5,6,7,8-tetrahydrofolate + glycine + H2O = (6S)-5,6,7,8-tetrahydrofolate + L-serine. The protein operates within one-carbon metabolism; tetrahydrofolate interconversion. Its pathway is amino-acid biosynthesis; glycine biosynthesis; glycine from L-serine: step 1/1. In terms of biological role, catalyzes the reversible interconversion of serine and glycine with tetrahydrofolate (THF) serving as the one-carbon carrier. This reaction serves as the major source of one-carbon groups required for the biosynthesis of purines, thymidylate, methionine, and other important biomolecules. Also exhibits THF-independent aldolase activity toward beta-hydroxyamino acids, producing glycine and aldehydes, via a retro-aldol mechanism. The protein is Serine hydroxymethyltransferase of Shewanella oneidensis (strain ATCC 700550 / JCM 31522 / CIP 106686 / LMG 19005 / NCIMB 14063 / MR-1).